The primary structure comprises 959 residues: Protein moonraker (959 aa).

A disordered region spans residues 124 to 156; the sequence is LPHSSHKGMHTKVERKDSKSQDVCHCSHQPSRV. Basic and acidic residues predominate over residues 134–145; sequence TKVERKDSKSQD. Serine 279 carries the phosphoserine modification. The segment covering 456–470 has biased composition (basic and acidic residues); that stretch reads EEAPRIEDNGTDFKD. Disordered regions lie at residues 456-560 and 572-610; these read EEAP…ASPK and RDAAKEQSLQQEDIHKESQLRGDAEQEAARLSWPDAESS. A compositionally biased stretch (polar residues) spans 515–533; sequence PNQPYSKSRLQQTTVSSRL. Positions 547–558 are enriched in pro residues; that stretch reads WIPPNPTSPPAS. The stretch at 582 to 674 forms a coiled coil; that stretch reads QEDIHKESQL…TQLADKVEEA (93 aa). Positions 583-599 are enriched in basic and acidic residues; that stretch reads EDIHKESQLRGDAEQEA. Residue serine 691 is modified to Phosphoserine. 2 disordered regions span residues 692–721 and 848–883; these read SVEANSHLKDRPSRHAAAAAQPAEQASDVP and LDESVTTEEGSEKREAPLPLSREDLHQRKGQTPLSV. Over residues 707 to 717 the composition is skewed to low complexity; that stretch reads AAAAAQPAEQA. Basic and acidic residues predominate over residues 857–874; it reads GSEKREAPLPLSREDLHQ. The tract at residues 877-959 is necessary and sufficient for CEP20-binding; that stretch reads GQTPLSVPPR…FTSEFLEAAA (83 aa).

Interacts with CEP63 and WDR62. Forms a complex with OFD1 and CEP20/FOR20. Interacts with PCM1.

The protein resides in the cytoplasm. The protein localises to the cytoskeleton. It is found in the microtubule organizing center. It localises to the centrosome. Its subcellular location is the centriolar satellite. Involved in centriole duplication. Positively regulates CEP63 centrosomal localization. Required for WDR62 centrosomal localization and promotes the centrosomal localization of CDK2. May play a role in cilium assembly. The sequence is that of Protein moonraker (Kiaa0753) from Mus musculus (Mouse).